Reading from the N-terminus, the 408-residue chain is Arginine biosynthesis bifunctional protein ArgJ 1 (408 aa).

Substrate is bound by residues threonine 154, lysine 180, threonine 191, glutamate 277, asparagine 403, and serine 408. The Nucleophile role is filled by threonine 191.

Belongs to the ArgJ family. In terms of assembly, heterotetramer of two alpha and two beta chains.

Its subcellular location is the cytoplasm. The enzyme catalyses N(2)-acetyl-L-ornithine + L-glutamate = N-acetyl-L-glutamate + L-ornithine. The catalysed reaction is L-glutamate + acetyl-CoA = N-acetyl-L-glutamate + CoA + H(+). The protein operates within amino-acid biosynthesis; L-arginine biosynthesis; L-ornithine and N-acetyl-L-glutamate from L-glutamate and N(2)-acetyl-L-ornithine (cyclic): step 1/1. Its pathway is amino-acid biosynthesis; L-arginine biosynthesis; N(2)-acetyl-L-ornithine from L-glutamate: step 1/4. In terms of biological role, catalyzes two activities which are involved in the cyclic version of arginine biosynthesis: the synthesis of N-acetylglutamate from glutamate and acetyl-CoA as the acetyl donor, and of ornithine by transacetylation between N(2)-acetylornithine and glutamate. The protein is Arginine biosynthesis bifunctional protein ArgJ 1 of Clostridium acetobutylicum (strain ATCC 824 / DSM 792 / JCM 1419 / IAM 19013 / LMG 5710 / NBRC 13948 / NRRL B-527 / VKM B-1787 / 2291 / W).